Reading from the N-terminus, the 658-residue chain is L-type lectin-domain containing receptor kinase V.4 (658 aa).

An N-terminal signal peptide occupies residues 1 to 25; it reads MSRTIGSRVIFLILALFCCTENSRG. Residues 26-248 form a legume-lectin like region; sequence KLVMQGSAGF…RAMHYMLSWF (223 aa). Residues 26 to 280 are Extracellular-facing; that stretch reads KLVMQGSAGF…EKSLVYRIVL (255 aa). Residues Asn66 and Asn196 are each glycosylated (N-linked (GlcNAc...) asparagine). Residues 281-301 traverse the membrane as a helical segment; sequence VTSLALVLFVALVASALSIFF. Residues 302–658 are Cytoplasmic-facing; sequence YRRHKKVKEV…LTEPFTSRGR (357 aa). The region spanning 334–592 is the Protein kinase domain; it reads KGFKQLLGKG…LGVLCSHQAV (259 aa). Residues 340 to 348 and Lys363 each bind ATP; that span reads LGKGGFGQV. The active-site Proton acceptor is the Asp460.

In the C-terminal section; belongs to the protein kinase superfamily. Ser/Thr protein kinase family. This sequence in the N-terminal section; belongs to the leguminous lectin family.

The protein localises to the cell membrane. It carries out the reaction L-seryl-[protein] + ATP = O-phospho-L-seryl-[protein] + ADP + H(+). The catalysed reaction is L-threonyl-[protein] + ATP = O-phospho-L-threonyl-[protein] + ADP + H(+). Involved in resistance response to the pathogenic oomycetes Phytophthora infestans and Phytophthora capsici and to the pathogenic bacteria Pseudomonas syringae. The protein is L-type lectin-domain containing receptor kinase V.4 of Arabidopsis thaliana (Mouse-ear cress).